Here is a 372-residue protein sequence, read N- to C-terminus: G patch domain and ankyrin repeat-containing protein 1 (372 aa).

A disordered region spans residues 74-110; sequence DSSSSKPQRAEPMRERKKKRRRVTREPAAAGVPRQGR. ANK repeat units follow at residues 124-155 and 156-186; these read LAAQ…ARDA and FWWT…WVGV. Disordered regions lie at residues 211 to 233 and 251 to 271; these read RESH…SSQF and AHLL…GVPT. Over residues 220 to 233 the composition is skewed to polar residues; the sequence is PENQNRSTPSSSQF. One can recognise a G-patch domain in the interval 271–317; it reads TSSPGFRLLLRGGWEPGMGLGPRGEGRANPIPTILKRDQEGLGYRSP. Residue lysine 306 forms a Glycyl lysine isopeptide (Lys-Gly) (interchain with G-Cter in SUMO2) linkage. 2 stretches are compositionally biased toward basic and acidic residues: residues 330–340 and 348–357; these read TRAVSGRERVP and RENRRQEEKG. Residues 330 to 357 form a disordered region; the sequence is TRAVSGRERVPRVATLSQRENRRQEEKG.

The polypeptide is G patch domain and ankyrin repeat-containing protein 1 (Gpank1) (Mus musculus (Mouse)).